The primary structure comprises 119 residues: Hydrogenase maturation factor HypA (119 aa).

Histidine 2 contacts Ni(2+). Zn(2+)-binding residues include cysteine 73, cysteine 76, cysteine 89, and cysteine 92.

This sequence belongs to the HypA/HybF family.

In terms of biological role, involved in the maturation of [NiFe] hydrogenases. Required for nickel insertion into the metal center of the hydrogenase. This is Hydrogenase maturation factor HypA from Dehalococcoides mccartyi (strain ATCC BAA-2100 / JCM 16839 / KCTC 5957 / BAV1).